The chain runs to 123 residues: PTS system glucitol/sorbitol-specific EIIA component (123 aa).

One can recognise a PTS EIIA type-5 domain in the interval 1–116 (MTVIYQTTIT…PDDIAPGSVL (116 aa)). His-43 (tele-phosphohistidine intermediate) is an active-site residue. His-43 is modified (phosphohistidine; by HPr).

The protein localises to the cytoplasm. Functionally, the phosphoenolpyruvate-dependent sugar phosphotransferase system (sugar PTS), a major carbohydrate active transport system, catalyzes the phosphorylation of incoming sugar substrates concomitantly with their translocation across the cell membrane. The enzyme II complex composed of SrlA, SrlB and SrlE is involved in glucitol/sorbitol transport. The chain is PTS system glucitol/sorbitol-specific EIIA component (srlB) from Shigella flexneri.